The chain runs to 162 residues: Putative ankyrin repeat protein RBE_0151 (162 aa).

ANK repeat units lie at residues 49-77 (EKWT…NINI), 81-110 (KGRT…VVAP), and 114-145 (YGWS…EHDK).

The protein is Putative ankyrin repeat protein RBE_0151 of Rickettsia bellii (strain RML369-C).